The primary structure comprises 106 residues: UPF0145 protein PSEEN3024 (106 aa).

Belongs to the UPF0145 family.

This chain is UPF0145 protein PSEEN3024, found in Pseudomonas entomophila (strain L48).